The primary structure comprises 224 residues: Ribonuclease HII (224 aa).

In terms of domain architecture, RNase H type-2 spans 33–224 (FHVAGVDEVG…LKERYRNDVS (192 aa)). 3 residues coordinate a divalent metal cation: D39, E40, and D131.

Belongs to the RNase HII family. Mn(2+) serves as cofactor. Requires Mg(2+) as cofactor.

It localises to the cytoplasm. The enzyme catalyses Endonucleolytic cleavage to 5'-phosphomonoester.. Functionally, endonuclease that specifically degrades the RNA of RNA-DNA hybrids. This chain is Ribonuclease HII, found in Bartonella tribocorum (strain CIP 105476 / IBS 506).